An 848-amino-acid chain; its full sequence is Dolabradiene synthase KSL4, chloroplastic (848 aa).

A chloroplast-targeting transit peptide spans M1–H64. A disordered region spans residues Q148 to L168. The Mg(2+) site is built by D597, D601, N742, S746, and E750. Positions D597–D601 match the DDXXD motif motif.

It belongs to the terpene synthase family. Mg(2+) is required as a cofactor.

The protein localises to the plastid. It localises to the chloroplast. The enzyme catalyses ent-copalyl diphosphate = dolabradiene + diphosphate. Involved in the production of antifungal dolabralexin phytoalexins in response to biotic and abiotic stresses. In response to fungal infection and in associtation with AN2, is involved in the production dolabradiene, a type of antifungal phytoalexin. Converts ent-copalyl disphosphate (ent-CPP) to dolabradiene. The sequence is that of Dolabradiene synthase KSL4, chloroplastic from Zea mays (Maize).